The primary structure comprises 140 residues: Large ribosomal subunit protein uL24 (140 aa).

This sequence belongs to the universal ribosomal protein uL24 family. In terms of assembly, part of the 50S ribosomal subunit.

Its function is as follows. One of two assembly initiator proteins, it binds directly to the 5'-end of the 23S rRNA, where it nucleates assembly of the 50S subunit. Functionally, located at the polypeptide exit tunnel on the outside of the subunit. The polypeptide is Large ribosomal subunit protein uL24 (Nanoarchaeum equitans (strain Kin4-M)).